The chain runs to 184 residues: GTP-binding protein Rheb (184 aa).

Lys8 is covalently cross-linked (Glycyl lysine isopeptide (Lys-Gly) (interchain with G-Cter in ubiquitin)). Positions 16, 17, 18, 19, 20, 21, 32, and 33 each coordinate GDP. GTP-binding residues include Ser16, Val17, Gly18, Lys19, Ser20, Ser21, Val32, Asp33, Tyr35, Pro37, Thr38, Gly63, Asn119, Lys120, and Asp122. Residue Ser20 participates in Mg(2+) binding. The Effector region motif lies at 35–43 (YDPTIENTF). Thr38 is a Mg(2+) binding site. Asn119 serves as a coordination point for GDP. A GDP-binding site is contributed by Asp122. Ser130 is modified (phosphoserine; by MAPKAPK5). Ala150 contributes to the GDP binding site. Ala150 is a GTP binding site. Cys181 carries the post-translational modification Cysteine methyl ester. Cys181 carries the S-farnesyl cysteine lipid modification. Residues 182-184 (SVM) constitute a propeptide, removed in mature form.

It belongs to the small GTPase superfamily. Rheb family. In terms of assembly, associates with the mTORC1 complex (MTOR, MLST8 and RPTOR) in a guanyl nucleotide-independent manner. Interacts with TSC2. Interacts with MCRS1; the interaction maintains RHEB at the lysosome in its active GTP-bound form and prevents its interaction with the mTORC1 complex inhibitor TSC2, ensuring activation of the mTORC1 complex by RHEB. Interacts (when prenylated) with PDE6D; this promotes release from membranes. Farnesylation is important for efficiently activating mTORC1-mediated signaling. Post-translationally, polyubiquitinated in response to amino acid, promoting its interaction with MTOR and mTORC1 activation. Deubiquitination by ATXN3 promotes recruitment of the TSC-TBC complex and RHEB inactivation by TSC2. Monoubiquitinated at Lys-8 by RNF152, promoting its association with the TSC-TBC complex. Deubiquitinated at Lys-8 by USP4, promoting mTORC1 activation. In terms of processing, phosphorylation by MAPKAPK5 impairs GTP-binding and inactivation.

The protein resides in the endomembrane system. It localises to the lysosome membrane. Its subcellular location is the golgi apparatus membrane. It is found in the endoplasmic reticulum membrane. The protein localises to the cytoplasm. The protein resides in the cytosol. The catalysed reaction is GTP + H2O = GDP + phosphate + H(+). With respect to regulation, alternates between an inactive form bound to GDP and an active form bound to GTP. Inactivated by the TSC-TBC complex via the GTPase activating protein (GAP) domain of TSC2. Autoinhibited by Tyr-35, which constrains the active site conformation, restricting the access of the catalytic Asp-65 to the nucleotide-binding pocket. Small GTPase that acts as an allosteric activator of the canonical mTORC1 complex, an evolutionarily conserved central nutrient sensor that stimulates anabolic reactions and macromolecule biosynthesis to promote cellular biomass generation and growth. In response to nutrients, growth factors or amino acids, specifically activates the protein kinase activity of MTOR, the catalytic component of the mTORC1 complex: acts by causing a conformational change that allows the alignment of residues in the active site of MTOR, thereby enhancing the phosphorylation of ribosomal protein S6 kinase (RPS6KB1 and RPS6KB2) and EIF4EBP1 (4E-BP1). RHEB is also required for localization of the TSC-TBC complex to lysosomal membranes. In response to starvation, RHEB is inactivated by the TSC-TBC complex, preventing activation of mTORC1. Has low intrinsic GTPase activity. In Mus musculus (Mouse), this protein is GTP-binding protein Rheb.